A 370-amino-acid polypeptide reads, in one-letter code: Cysteine-type anaerobic sulfatase-maturating enzyme (370 aa).

The region spanning 1 to 227 (MPPLSLLIKP…LKNLFDFWYE (227 aa)) is the Radical SAM core domain. Cys-15 and Cys-19 together coordinate [4Fe-4S] cluster. Residue Tyr-21 coordinates S-adenosyl-L-methionine. A [4Fe-4S] cluster-binding site is contributed by Cys-22. Residues Gly-66, Ser-122, Arg-134, and Leu-195 each coordinate S-adenosyl-L-methionine. Residues Cys-255, Cys-261, and Cys-276 each contribute to the [4Fe-4S] cluster site. The active-site Proton acceptor is the Asp-277. The [4Fe-4S] cluster site is built by Cys-317, Cys-320, Cys-326, Cys-330, and Cys-348.

It belongs to the radical SAM superfamily. Anaerobic sulfatase-maturating enzyme family. As to quaternary structure, monomer. Requires [4Fe-4S] cluster as cofactor.

The catalysed reaction is L-cysteinyl-[sulfatase] + S-adenosyl-L-methionine + H2O = 3-oxo-L-alanyl-[sulfatase] + hydrogen sulfide + 5'-deoxyadenosine + L-methionine + 2 H(+). Its pathway is protein modification; sulfatase oxidation. Involved in 'Cys-type' sulfatase maturation under anaerobic conditions. Catalyzes the post-translational modification of cysteine ('Cys-51' in the arylsulfatase CPF_0221) into 3-oxoalanine (also known as C(alpha)-formylglycine (FGly)), by a free radical chemical mechanism initiated via the reductive cleavage of S-adenosyl-L-methionine (SAM). Is also able to oxidize a serine residue in a synthetic substrate to FGly in vitro, and in a serine variant of a Cys-type sulfatase in vivo, but this activity is not physiological. Converts threonyl peptides to the corresponding ketone product, and also allo-threonyl peptides, but with a significantly reduced efficiency. In Clostridium perfringens (strain ATCC 13124 / DSM 756 / JCM 1290 / NCIMB 6125 / NCTC 8237 / Type A), this protein is Cysteine-type anaerobic sulfatase-maturating enzyme.